The chain runs to 970 residues: Disease resistance protein RGA2 (970 aa).

Residues 135–438 (RQAVRRETGS…MAHGFLLSKG (304 aa)) enclose the NB-ARC domain. 182 to 189 (GMGGLGKT) is an ATP binding site. LRR repeat units follow at residues 525-548 (FISLRVLNLGDSTFNKLPSSIGDL), 550-571 (HLRYLNLYGSGMRSLPKQLCKL), 573-594 (NLQTLDLQYCTKLCCLPKETSK), 595-619 (LGSLRNLLLDGSQSLTCMPPRIGSL), 638-662 (LGELGNLNLYGSIKISHLERVKNDK), 672-697 (KGNLHSLSMSWNNFGPHIYESEEVKV), 752-777 (LPCLESLELHWGSADVEYVEEVDIDV), 787-811 (FPSLRKLDIWDFGSLKGLLKKEGEE), 813-832 (FPVLEEMIIHECPFLTLSSN), 833-857 (LRALTSLRICYNKVATSFPEEMFKN), 859-882 (ANLKYLTISRCNNLKELPTSLASL), 884-906 (ALKSLKIQLCCALESLPEEGLEG), 907-931 (LSSLTELFVEHCNMLKCLPEGLQHL), and 946-970 (IKRCEKGIGEDWHKISHIPNVNIYI).

The protein belongs to the disease resistance NB-LRR family.

Its function is as follows. Disease resistance protein. Resistance proteins guard the plant against pathogens that contain an appropriate avirulence protein via a direct or indirect interaction with this avirulence protein. That triggers a defense system which restricts the pathogen growth. Confers a broad resistance to all known races of P.infestans. The chain is Disease resistance protein RGA2 (RGA2) from Solanum bulbocastanum (Wild potato).